Here is a 306-residue protein sequence, read N- to C-terminus: Pantothenate kinase (306 aa).

91–98 provides a ligand contact to ATP; sequence GSVAVGKS.

It belongs to the prokaryotic pantothenate kinase family.

Its subcellular location is the cytoplasm. The enzyme catalyses (R)-pantothenate + ATP = (R)-4'-phosphopantothenate + ADP + H(+). The protein operates within cofactor biosynthesis; coenzyme A biosynthesis; CoA from (R)-pantothenate: step 1/5. The sequence is that of Pantothenate kinase from Streptococcus equi subsp. zooepidemicus (strain MGCS10565).